We begin with the raw amino-acid sequence, 517 residues long: Beclin-1-like protein (517 aa).

The tract at residues 76 to 106 (LPRHKPPQSQGIPPRPRGASSPQPDATQSGK) is disordered. Over residues 95–105 (SSPQPDATQSG) the composition is skewed to polar residues. The stretch at 172–266 (CLECMRVLSD…NRFNELEDRY (95 aa)) forms a coiled coil.

The protein belongs to the beclin family. As to quaternary structure, component of a phosphatidylinositol 3-kinase (PI3K) complex composed of ATG6, SH3P2 and FREE1. Interacts with SINAT1, SINAT2, SINAT5, SINAT6, TRAF1A and TRAF1B. Interacts with TUBB8/TUB8. Component of a complex made of VPS38/USL1 and PI3K main subunits such as VPS15, ATG6/VPS30 and VPS34. Binds directly to VPS38/USL1. In terms of processing, ubiquitinated. The interaction with SINAT1 or SINAT2, and the presence of TRAF1A/MUSE14 and TRAF1B/MUSE13, mediates its proteasome-dependent degradation. In terms of tissue distribution, highly expressed in mature pollen grains. Expressed in roots, leaves, stems, flowers and siliques.

The protein resides in the cytoplasm. It localises to the cytoskeleton. Its function is as follows. Required for normal plant development. Required for pollen germination. Required for autophagic activity. Required to limit the pathogen-associated cell death response. May be involved in vacuolar protein sorting. Binds to microtubules. May facilitate efficient recruitment of other ATG proteins to assemble scaffolds for autophagosome biogenesis. This Arabidopsis thaliana (Mouse-ear cress) protein is Beclin-1-like protein.